The chain runs to 288 residues: Energy-coupling factor transporter ATP-binding protein EcfA2 (288 aa).

An ABC transporter domain is found at 2 to 244 (IKFEKVNYTY…VDFLKAHELG (243 aa)). 39–46 (GHTGSGKS) contacts ATP.

Belongs to the ABC transporter superfamily. Energy-coupling factor EcfA family. Forms a stable energy-coupling factor (ECF) transporter complex composed of 2 membrane-embedded substrate-binding proteins (S component), 2 ATP-binding proteins (A component) and 2 transmembrane proteins (T component).

The protein resides in the cell membrane. In terms of biological role, ATP-binding (A) component of a common energy-coupling factor (ECF) ABC-transporter complex. Unlike classic ABC transporters this ECF transporter provides the energy necessary to transport a number of different substrates. This Lactococcus lactis subsp. lactis (strain IL1403) (Streptococcus lactis) protein is Energy-coupling factor transporter ATP-binding protein EcfA2.